Consider the following 1656-residue polypeptide: MAQKPNFLKKLISAGLVTASTATIVASFAGSAMGAAIQQNRTTNGVATTVDGVGFDQTVALANVAVAPNAVITANANNGINLNTPAGSFNGLFLSNANNLAVTVSEDTTLGFINNAANNANRFNLTLDAGKTLTITGQGITNVQSAATHNAQNIVAKFNGGAAIANNDLSGLGTIDFGAAASTLVFDLANPTTQKAPLILADNALIVNGANGTLNVTNGFIQVSDKSFATVKAINIGDGQGFMFNTNATNANALNLQAGGTTINFNGTDGTGRLVLLSKNGAATDFNVTGSLGGNLKGIIELNTVAINGQLIANAGPANAVIGTNNGAGRAAGFVVSVDNGKAATIDGQVYAKDMVIQSANANGQVNFRHIVDVGIDGTTAFKTAASIVAITQNSNFGTTDFGNLAAQVTVPDTMTLTGNFTGDANNPGNTAGVITFAANGTLASASADANVAVTNNITAIEASGVGVVQLSGTHTAELRLGNAGSVFKLADGTVINGKVNQTVLVGGVLAAGAITLDGSATITGDIGNGGGGAALQSITLANDATKTLTLGGANIISANGGTINFQANGGTIKLTSTQNNIVVDCDLAIATDQTGVVDASSLTNAQTLTISGTIGIIGANNTTLGQFNIGSSKTTLNGGNVAINELVIGNNGSVQFAHNTYLITRTTNAAGQGKIIFNPVVNNNTTLAAGTNLGSAANPLAEINFGSKGARADTVLNVGEGVNLYATNITTTDANVGSFVFNAGGKNIVSGTVGGQQGNKFNTVALDNGTTVKFLGNATFNGNTTIAANSTLQISGNYTADFIASADGTGIVEFVNTGPINVTLNKQAVPVNALKQITVSGPGNVVVNEIGNAGNYHGAMTDTIAFENSSLGAVLFLPSGIPFNDAGNTIPLTIKSTVGNETAEGFSVPSVIVSGVDSVIADGQVIGDQNNIVGLGLGSDNGIIVNATTLYAGIGTINNNQGTVTLSGGVPNTPGTVYGLGTGIGASKFKQVTFTTDYNNLGNIIATNTTINDGVTVTTGGIAAGGIAGTDFDGKITLGSVNGNANVRFADGIFSNSTSMIVTTKANNGTVTYLGNAFVGNIGDSDTPVASVRFTGSNNGAGLKGNIYSQVIDFGTYNLGIVNSNVILGGSTTAINGKIDLLTNTLTFAGGTSTWGNNTSIETTLTLANGNIGHIVIAEGAQVNATTTGTTTINVQDNANANFSGTQTYTLIQGGARFNGTLGGPNFTVTGSNRFVNYGLIRAANQDYVITRTNNAENIVTNDITNSPFGGAPGVGQNVTTFVNATNTAAYNNLLLAKNSADSANFVGTIVTDTSAAITNAQLDVAKDIQAQLGNRLGALRYLGTPEMVGSEAGAIPAAVAAGDEAVDNVAYGIWAKPFYTDAHQSKKGGLAGYKAKTTGIVIGLDTLANNNLMIGAAIGITKTDIKHQDYKKGDKTDVNGFSFSLYGAQQFVENFFAQGSAIFSLNQVKNKSQRYFFDANGNMSKQIAAGNYDNMTFGGNLTVGYDYNAMQGVLVTPMAGLSYLKSSDENYKETGTTVANKQVNSKFSDRTDLIVGAKVAGGTMNITDFAVYPEVHAFVVHKVTGRLSKTQSVLDGQVTPCISQPDRTAKTSYNLGLSASIRSDAKMEYGIGYDAQIASKYTAHQGTLKVRVNF.

Positions 1339–1363 (GALRYLGTPEMVGSEAGAIPAAVAA) are excised as a propeptide. The Autotransporter domain occupies 1368 to 1656 (VDNVAYGIWA…QGTLKVRVNF (289 aa)).

This sequence belongs to the rickettsiae OmpA/OmpB family.

The protein localises to the periplasm. It localises to the secreted. The protein resides in the cell surface. It is found in the cell outer membrane. Its function is as follows. The 120 kDa surface-exposed protein is a major structural protein which may play a role as a rickettsial virulence factor and/or immunogen during infection. In terms of biological role, the 32 kDa beta peptide may serve as a membrane anchor. The polypeptide is Outer membrane protein B (ompB) (Rickettsia japonica (strain ATCC VR-1363 / YH)).